Consider the following 356-residue polypeptide: Heat-inducible transcription repressor HrcA (356 aa).

This sequence belongs to the HrcA family.

Its function is as follows. Negative regulator of class I heat shock genes (grpE-dnaK-dnaJ and groELS operons). Prevents heat-shock induction of these operons. The protein is Heat-inducible transcription repressor HrcA of Gluconobacter oxydans (strain 621H) (Gluconobacter suboxydans).